Here is a 174-residue protein sequence, read N- to C-terminus: RNA pyrophosphohydrolase (174 aa).

Residues 6 to 149 form the Nudix hydrolase domain; it reads GFRANVGIII…KRDVYRKVMK (144 aa). The Nudix box signature appears at 38–59; it reads GGVDEGESAEQAMYRELYEEVG.

The protein belongs to the Nudix hydrolase family. RppH subfamily. A divalent metal cation is required as a cofactor.

Accelerates the degradation of transcripts by removing pyrophosphate from the 5'-end of triphosphorylated RNA, leading to a more labile monophosphorylated state that can stimulate subsequent ribonuclease cleavage. This Shewanella loihica (strain ATCC BAA-1088 / PV-4) protein is RNA pyrophosphohydrolase.